A 412-amino-acid polypeptide reads, in one-letter code: Serine hydroxymethyltransferase (412 aa).

(6S)-5,6,7,8-tetrahydrofolate contacts are provided by residues Leu-119 and Gly-123 to Leu-125. An N6-(pyridoxal phosphate)lysine modification is found at Lys-228.

Belongs to the SHMT family. Homodimer. Pyridoxal 5'-phosphate serves as cofactor.

It is found in the cytoplasm. The enzyme catalyses (6R)-5,10-methylene-5,6,7,8-tetrahydrofolate + glycine + H2O = (6S)-5,6,7,8-tetrahydrofolate + L-serine. It participates in one-carbon metabolism; tetrahydrofolate interconversion. The protein operates within amino-acid biosynthesis; glycine biosynthesis; glycine from L-serine: step 1/1. Functionally, catalyzes the reversible interconversion of serine and glycine with tetrahydrofolate (THF) serving as the one-carbon carrier. This reaction serves as the major source of one-carbon groups required for the biosynthesis of purines, thymidylate, methionine, and other important biomolecules. Also exhibits THF-independent aldolase activity toward beta-hydroxyamino acids, producing glycine and aldehydes, via a retro-aldol mechanism. This is Serine hydroxymethyltransferase from Thermodesulfovibrio yellowstonii (strain ATCC 51303 / DSM 11347 / YP87).